Reading from the N-terminus, the 397-residue chain is S-adenosylmethionine synthase (397 aa).

Histidine 16 lines the ATP pocket. Aspartate 18 provides a ligand contact to Mg(2+). K(+) is bound at residue glutamate 44. Residues glutamate 57 and glutamine 100 each contribute to the L-methionine site. Positions 100–110 (QSPDIAQGVNE) are flexible loop. Residues 175 to 177 (DAK), 242 to 243 (RF), aspartate 251, 257 to 258 (RK), alanine 274, and lysine 278 contribute to the ATP site. Residue aspartate 251 participates in L-methionine binding. Lysine 282 is a binding site for L-methionine.

It belongs to the AdoMet synthase family. In terms of assembly, homotetramer; dimer of dimers. Requires Mg(2+) as cofactor. K(+) is required as a cofactor.

Its subcellular location is the cytoplasm. The catalysed reaction is L-methionine + ATP + H2O = S-adenosyl-L-methionine + phosphate + diphosphate. Its pathway is amino-acid biosynthesis; S-adenosyl-L-methionine biosynthesis; S-adenosyl-L-methionine from L-methionine: step 1/1. Its function is as follows. Catalyzes the formation of S-adenosylmethionine (AdoMet) from methionine and ATP. The overall synthetic reaction is composed of two sequential steps, AdoMet formation and the subsequent tripolyphosphate hydrolysis which occurs prior to release of AdoMet from the enzyme. The chain is S-adenosylmethionine synthase from Streptococcus thermophilus (strain ATCC BAA-250 / LMG 18311).